The following is a 124-amino-acid chain: Small ribosomal subunit protein bS6 (124 aa).

The disordered stretch occupies residues 96–124 (ETGPSPMMKEVQREEAKKAAAAQPTEAQA). Residues 114-124 (AAAAQPTEAQA) show a composition bias toward low complexity.

The protein belongs to the bacterial ribosomal protein bS6 family.

In terms of biological role, binds together with bS18 to 16S ribosomal RNA. This is Small ribosomal subunit protein bS6 from Burkholderia lata (strain ATCC 17760 / DSM 23089 / LMG 22485 / NCIMB 9086 / R18194 / 383).